We begin with the raw amino-acid sequence, 489 residues long: Actin-related protein 4 (489 aa).

Positions 323–379 (KRTKPSGVNKSDKKVTPTEEKEQEAVSKSTSPAANSADTPNETGKRPLEEEKPPKEN) are disordered. Residues 332–347 (KSDKKVTPTEEKEQEA) show a composition bias toward basic and acidic residues. The span at 348–364 (VSKSTSPAANSADTPNE) shows a compositional bias: polar residues. A Phosphoserine modification is found at Ser-349. The span at 365–379 (TGKRPLEEEKPPKEN) shows a compositional bias: basic and acidic residues.

This sequence belongs to the actin family. ARP4 subfamily. Component of the NuA4 histone acetyltransferase complex composed of at least ACT1, ARP4, EAF3, EAF5, EAF6, EAF7, EPL1, ESA1, SWC4, TRA1, VID21, YAF9 and YNG2. Component of the chromatin-remodeling INO80 complex, at least composed of ARP4, ARP5, ARP8, RVB1, RVB2, TAF14, NHP10, IES1, IES3, IES4, IES6, ACT1, IES2, IES5 and INO80. Component of the SWR1 chromatin remodeling complex composed of at least ACT1, ARP4, RVB1, RVB2, ARP6, YAF9, VPS71, VPS72, SWC3, SWC4, SWC5, SWC7 and SWR1, and perhaps BDF1. Interacts with histones H4 (HHF1 and HHF2), H3 (HHT1 and HHT2) and H2A (HTA1 and HTA2).

The protein localises to the nucleus. Its function is as follows. Chromatin interaction component of the NuA4 histone acetyltransferase complex which is involved in transcriptional activation of selected genes principally by acetylation of nucleosomal histone H4 and H2A. The NuA4 complex is also involved in DNA repair. ARP4 recognizes H2AS128ph (gamma-H2A) and is required for NuA4 complex integrity. Component of the SWR1 complex which mediates the ATP-dependent exchange of histone H2A for the H2A variant HZT1 leading to transcriptional regulation of selected genes by chromatin remodeling. Component of the INO80 complex which remodels chromatin by shifting nucleosomes. Its ability to induce transcription of some phosphate-responsive genes is modulated by inositol polyphosphates. The INO80 complex is involved in DNA repair by associating to gamma-H2A as a response to DNA damage. In Saccharomyces cerevisiae (strain ATCC 204508 / S288c) (Baker's yeast), this protein is Actin-related protein 4 (ARP4).